The following is a 275-amino-acid chain: Rhamnulose-1-phosphate aldolase (275 aa).

The active site involves Glu-117. Zn(2+) is bound by residues His-141, His-143, and His-212.

The protein belongs to the aldolase class II family. RhaD subfamily. In terms of assembly, homotetramer. The cofactor is Zn(2+).

The protein localises to the cytoplasm. The enzyme catalyses L-rhamnulose 1-phosphate = (S)-lactaldehyde + dihydroxyacetone phosphate. It functions in the pathway carbohydrate degradation; L-rhamnose degradation; glycerone phosphate from L-rhamnose: step 3/3. Functionally, catalyzes the reversible cleavage of L-rhamnulose-1-phosphate to dihydroxyacetone phosphate (DHAP) and L-lactaldehyde. This Salmonella paratyphi B (strain ATCC BAA-1250 / SPB7) protein is Rhamnulose-1-phosphate aldolase.